Here is a 90-residue protein sequence, read N- to C-terminus: U7-theraphotoxin-Hhn1a 5 (90 aa).

The N-terminal stretch at 1 to 19 is a signal peptide; it reads MKTAIFTVVLALAVFAVLS. The propeptide occupies 20 to 50; the sequence is FGWEANEKALSEESTELIHEKEAASETEARE. 3 disulfides stabilise this stretch: Cys51-Cys65, Cys58-Cys70, and Cys64-Cys81.

The protein belongs to the neurotoxin 10 (Hwtx-1) family. 13 (Hntx-13) subfamily. As to expression, expressed by the venom gland.

Its subcellular location is the secreted. In terms of biological role, ion channel inhibitor. The sequence is that of U7-theraphotoxin-Hhn1a 5 from Cyriopagopus hainanus (Chinese bird spider).